The following is a 236-amino-acid chain: Small ribosomal subunit protein uS2c (236 aa).

This sequence belongs to the universal ribosomal protein uS2 family.

Its subcellular location is the plastid. It is found in the chloroplast. This is Small ribosomal subunit protein uS2c (rps2) from Lemna minor (Common duckweed).